The primary structure comprises 433 residues: Dihydrolipoyllysine-residue acetyltransferase component of pyruvate dehydrogenase complex (433 aa).

One can recognise a Lipoyl-binding domain in the interval 2-77; that stretch reads AFEFRLPDIG…VVGDVIVKID (76 aa). At Lys-43 the chain carries N6-lipoyllysine. Disordered regions lie at residues 80-134 and 164-204; these read DAEE…PSVR and YLNG…FPET. 2 stretches are compositionally biased toward basic and acidic residues: residues 84–103 and 117–126; these read MQFK…KEQE and EKTEVDESKT. In terms of domain architecture, Peripheral subunit-binding (PSBD) spans 128 to 165; it reads KAMPSVRKYARENGVNIKAVNGSGKNGRITKEDIDAYL. A compositionally biased stretch (low complexity) spans 166–185; that stretch reads NGGSSEEGSNTSAASESTSS. Residue His-404 is part of the active site.

The protein belongs to the 2-oxoacid dehydrogenase family. Forms a 24-polypeptide structural core with octahedral symmetry. It depends on (R)-lipoate as a cofactor.

The enzyme catalyses N(6)-[(R)-dihydrolipoyl]-L-lysyl-[protein] + acetyl-CoA = N(6)-[(R)-S(8)-acetyldihydrolipoyl]-L-lysyl-[protein] + CoA. Its function is as follows. The pyruvate dehydrogenase complex catalyzes the overall conversion of pyruvate to acetyl-CoA and CO(2). It contains multiple copies of three enzymatic components: pyruvate dehydrogenase (E1), dihydrolipoamide acetyltransferase (E2) and lipoamide dehydrogenase (E3). The sequence is that of Dihydrolipoyllysine-residue acetyltransferase component of pyruvate dehydrogenase complex (pdhC) from Staphylococcus epidermidis (strain ATCC 35984 / DSM 28319 / BCRC 17069 / CCUG 31568 / BM 3577 / RP62A).